We begin with the raw amino-acid sequence, 405 residues long: Tyrosine--tRNA ligase (405 aa).

Tyrosine 35 serves as a coordination point for L-tyrosine. The 'HIGH' region signature appears at 40-49; it reads ATSSSLHIGH. Residues tyrosine 166 and glutamine 170 each contribute to the L-tyrosine site. The 'KMSKS' region signature appears at 226–230; the sequence is KMGKS. Lysine 229 is an ATP binding site. The S4 RNA-binding domain maps to 340-405; the sequence is ILLVDLMLDS…GKKKFLRIVI (66 aa).

It belongs to the class-I aminoacyl-tRNA synthetase family. TyrS type 1 subfamily. In terms of assembly, homodimer.

It is found in the cytoplasm. It catalyses the reaction tRNA(Tyr) + L-tyrosine + ATP = L-tyrosyl-tRNA(Tyr) + AMP + diphosphate + H(+). Catalyzes the attachment of tyrosine to tRNA(Tyr) in a two-step reaction: tyrosine is first activated by ATP to form Tyr-AMP and then transferred to the acceptor end of tRNA(Tyr). The chain is Tyrosine--tRNA ligase from Borreliella burgdorferi (strain ATCC 35210 / DSM 4680 / CIP 102532 / B31) (Borrelia burgdorferi).